A 342-amino-acid polypeptide reads, in one-letter code: Farnesyl pyrophosphate synthase (342 aa).

Isopentenyl diphosphate-binding residues include Lys-47, Arg-50, and Gln-86. Mg(2+) is bound by residues Asp-93 and Asp-97. Arg-102 is a dimethylallyl diphosphate binding site. Residue Arg-103 coordinates isopentenyl diphosphate. Dimethylallyl diphosphate-binding residues include Lys-190, Thr-191, Gln-229, Lys-246, and Lys-255.

This sequence belongs to the FPP/GGPP synthase family. As to quaternary structure, homodimer. Mg(2+) is required as a cofactor. Mostly expressed in roots and seeds, and to a lower extent, in leaves and stems.

The protein localises to the cytoplasm. It catalyses the reaction isopentenyl diphosphate + dimethylallyl diphosphate = (2E)-geranyl diphosphate + diphosphate. The enzyme catalyses isopentenyl diphosphate + (2E)-geranyl diphosphate = (2E,6E)-farnesyl diphosphate + diphosphate. Its pathway is isoprenoid biosynthesis; farnesyl diphosphate biosynthesis; farnesyl diphosphate from geranyl diphosphate and isopentenyl diphosphate: step 1/1. It functions in the pathway isoprenoid biosynthesis; geranyl diphosphate biosynthesis; geranyl diphosphate from dimethylallyl diphosphate and isopentenyl diphosphate: step 1/1. With respect to regulation, stimulated by methyl jasmonate (MeJA). Catalyzes the sequential condensation of isopentenyl pyrophosphate with the allylic pyrophosphates, dimethylallyl pyrophosphate, and then with the resultant geranylpyrophosphate to the ultimate product farnesyl pyrophosphate. Component of the triterpene saponins (e.g. ginsenosides or panaxosides) and phytosterols biosynthetic pathways. Promotes the accumulation of ginsenosides. The sequence is that of Farnesyl pyrophosphate synthase from Panax ginseng (Korean ginseng).